Reading from the N-terminus, the 147-residue chain is Ubiquitin-conjugating enzyme E2 D3 (147 aa).

Residues M1–M147 enclose the UBC core domain. Cysteines 21 and 107 form a disulfide. The Glycyl thioester intermediate role is filled by C85.

This sequence belongs to the ubiquitin-conjugating enzyme family. Interacts with SCF (SKP1-CUL1-F-box protein) E3 ubiquitin ligase complex; when Cullin is neddylated, the interaction between the E2 and the SCF complex is strengthened. Interacts with DAPK3. Interacts with BRCA1; the DNA damage checkpoint promotes the association with BRCA1 after ionizing radiation. Interacts non-covalently with ubiquitin. Interacts with E3 ubiquitin-protein ligase CBLC. Interacts with UBTD1. Interacts with RIGI and RNF135; involved in RIGI ubiquitination and activation. In terms of processing, phosphorylated by AURKB.

Its subcellular location is the cell membrane. It localises to the endosome membrane. It catalyses the reaction S-ubiquitinyl-[E1 ubiquitin-activating enzyme]-L-cysteine + [E2 ubiquitin-conjugating enzyme]-L-cysteine = [E1 ubiquitin-activating enzyme]-L-cysteine + S-ubiquitinyl-[E2 ubiquitin-conjugating enzyme]-L-cysteine.. It carries out the reaction S-ubiquitinyl-[E1 ubiquitin-activating enzyme]-L-cysteine + [acceptor protein]-L-lysine = [E1 ubiquitin-activating enzyme]-L-cysteine + N(6)-monoubiquitinyl-[acceptor protein]-L-lysine.. It participates in protein modification; protein ubiquitination. Functionally, accepts ubiquitin from the E1 complex and catalyzes its covalent attachment to other proteins. In vitro catalyzes 'Lys-11'-, as well as 'Lys-48'-linked polyubiquitination. Cooperates with the E2 CDC34 and the SCF(FBXW11) E3 ligase complex for the polyubiquitination of NFKBIA leading to its subsequent proteasomal degradation. Acts as an initiator E2, priming the phosphorylated NFKBIA target at positions 'Lys-21' and/or 'Lys-22' with a monoubiquitin. Ubiquitin chain elongation is then performed by CDC34, building ubiquitin chains from the UBE2D3-primed NFKBIA-linked ubiquitin. Also acts as an initiator E2, in conjunction with RNF8, for the priming of PCNA. Monoubiquitination of PCNA, and its subsequent polyubiquitination, are essential events in the operation of the DNA damage tolerance (DDT) pathway that is activated after DNA damage caused by UV or chemical agents during S-phase. Associates with the BRCA1/BARD1 E3 ligase complex to perform ubiquitination at DNA damage sites following ionizing radiation leading to DNA repair. Targets DAPK3 for ubiquitination which influences promyelocytic leukemia protein nuclear body (PML-NB) formation in the nucleus. In conjunction with the MDM2 and TOPORS E3 ligases, functions ubiquitination of p53/TP53. In conjunction with the CBL E3 ligase, targets EGFR for polyubiquitination at the plasma membrane as well as during its internalization and transport on endosomes. In conjunction with the STUB1 E3 quality control E3 ligase, ubiquitinates unfolded proteins to catalyze their immediate destruction. Together with RNF135, catalyzes the viral RNA-dependent 'Lys-63'-linked polyubiquitination of RIGI to activate the downstream signaling pathway that leads to interferon beta production. Together with ZNF598, catalyzes ubiquitination of 40S ribosomal proteins in response to ribosome collisions. In cooperation with the GATOR2 complex, catalyzes 'Lys-6'-linked ubiquitination of NPRL2. The sequence is that of Ubiquitin-conjugating enzyme E2 D3 (UBE2D3) from Bos taurus (Bovine).